The sequence spans 81 residues: Photosystem I iron-sulfur center (81 aa).

4Fe-4S ferredoxin-type domains follow at residues 2 to 31 (AHSV…MIPW) and 39 to 68 (IASA…VRVY). Residues Cys11, Cys14, Cys17, Cys21, Cys48, Cys51, Cys54, and Cys58 each coordinate [4Fe-4S] cluster.

The eukaryotic PSI reaction center is composed of at least 11 subunits. [4Fe-4S] cluster serves as cofactor.

The protein localises to the plastid. It localises to the chloroplast thylakoid membrane. The enzyme catalyses reduced [plastocyanin] + hnu + oxidized [2Fe-2S]-[ferredoxin] = oxidized [plastocyanin] + reduced [2Fe-2S]-[ferredoxin]. Its function is as follows. Apoprotein for the two 4Fe-4S centers FA and FB of photosystem I (PSI); essential for photochemical activity. FB is the terminal electron acceptor of PSI, donating electrons to ferredoxin. The C-terminus interacts with PsaA/B/D and helps assemble the protein into the PSI complex. Required for binding of PsaD and PsaE to PSI. PSI is a plastocyanin-ferredoxin oxidoreductase, converting photonic excitation into a charge separation, which transfers an electron from the donor P700 chlorophyll pair to the spectroscopically characterized acceptors A0, A1, FX, FA and FB in turn. The polypeptide is Photosystem I iron-sulfur center (Cycas taitungensis (Prince sago)).